The sequence spans 119 residues: Large ribosomal subunit protein bL20 (119 aa).

The protein belongs to the bacterial ribosomal protein bL20 family.

Binds directly to 23S ribosomal RNA and is necessary for the in vitro assembly process of the 50S ribosomal subunit. It is not involved in the protein synthesizing functions of that subunit. This Clostridium botulinum (strain ATCC 19397 / Type A) protein is Large ribosomal subunit protein bL20.